Consider the following 452-residue polypeptide: PHO85 cyclin CLG1 (452 aa).

It belongs to the cyclin family. PCL1,2 subfamily. In terms of assembly, forms a cyclin-CDK complex with PHO85.

Cyclin partner of the cyclin-dependent kinase (CDK) PHO85. Has a role in cell integrity and polarized cell growth together with the other PCL1/PCL2 cyclin family members. The chain is PHO85 cyclin CLG1 (CLG1) from Saccharomyces cerevisiae (strain ATCC 204508 / S288c) (Baker's yeast).